Consider the following 881-residue polypeptide: Alanine--tRNA ligase (881 aa).

Residues histidine 564, histidine 568, cysteine 673, and histidine 677 each coordinate Zn(2+). The tract at residues 848 to 867 is disordered; the sequence is GQGGGGRPDMAQAGGPDGDK.

This sequence belongs to the class-II aminoacyl-tRNA synthetase family. Requires Zn(2+) as cofactor.

It is found in the cytoplasm. The catalysed reaction is tRNA(Ala) + L-alanine + ATP = L-alanyl-tRNA(Ala) + AMP + diphosphate. Its function is as follows. Catalyzes the attachment of alanine to tRNA(Ala) in a two-step reaction: alanine is first activated by ATP to form Ala-AMP and then transferred to the acceptor end of tRNA(Ala). Also edits incorrectly charged Ser-tRNA(Ala) and Gly-tRNA(Ala) via its editing domain. The polypeptide is Alanine--tRNA ligase (Hyphomonas neptunium (strain ATCC 15444)).